The chain runs to 159 residues: Sumo-conjugating enzyme ubc9 (159 aa).

In terms of domain architecture, UBC core spans 4–157 (ISSARLSEER…VKAQSKVYPP (154 aa)). The active-site Glycyl thioester intermediate is the Cys93.

Belongs to the ubiquitin-conjugating enzyme family.

The protein resides in the nucleus. It functions in the pathway protein modification; protein sumoylation. Its function is as follows. Accepts the ubiquitin-like protein sumo from the E1 complex and catalyzes its covalent attachment to other proteins with the help of an E3 ligase. In Dictyostelium discoideum (Social amoeba), this protein is Sumo-conjugating enzyme ubc9 (ubc9).